Here is a 125-residue protein sequence, read N- to C-terminus: Fluoride-specific ion channel FluC (125 aa).

A run of 4 helical transmembrane segments spans residues 5–25 (ILAI…LALW), 37–57 (LAAN…FHLL), 71–91 (GFLG…TMLL), and 97–117 (VALL…WLGI). Na(+) is bound by residues Gly-74 and Thr-77.

This sequence belongs to the fluoride channel Fluc/FEX (TC 1.A.43) family.

The protein resides in the cell inner membrane. It catalyses the reaction fluoride(in) = fluoride(out). With respect to regulation, na(+) is not transported, but it plays an essential structural role and its presence is essential for fluoride channel function. Fluoride-specific ion channel. Important for reducing fluoride concentration in the cell, thus reducing its toxicity. This is Fluoride-specific ion channel FluC from Variovorax paradoxus (strain S110).